Consider the following 305-residue polypeptide: Acetylglutamate kinase (305 aa).

Residues 75–76 (GG), arginine 97, and asparagine 202 contribute to the substrate site.

It belongs to the acetylglutamate kinase family. ArgB subfamily.

The protein localises to the cytoplasm. The enzyme catalyses N-acetyl-L-glutamate + ATP = N-acetyl-L-glutamyl 5-phosphate + ADP. It participates in amino-acid biosynthesis; L-arginine biosynthesis; N(2)-acetyl-L-ornithine from L-glutamate: step 2/4. In terms of biological role, catalyzes the ATP-dependent phosphorylation of N-acetyl-L-glutamate. This is Acetylglutamate kinase from Rhodospirillum centenum (strain ATCC 51521 / SW).